The chain runs to 430 residues: Putative FBD-associated F-box protein At5g56440 (430 aa).

The 49-residue stretch at 1 to 49 folds into the F-box domain; sequence MDRISLLPDDVVFKILSFVPTKVVVSTNLLSKRWRYLWKHVPKLDYRDP. The 51-residue stretch at 349 to 399 folds into the FBD domain; sequence QWEQPSSVPKCLISSLETVEWIDYKGREVEKKVVMYLLENSRQLKTMAIRS.

In Arabidopsis thaliana (Mouse-ear cress), this protein is Putative FBD-associated F-box protein At5g56440.